The primary structure comprises 131 residues: Transcription antitermination protein NusB (131 aa).

The protein belongs to the NusB family.

Its function is as follows. Involved in transcription antitermination. Required for transcription of ribosomal RNA (rRNA) genes. Binds specifically to the boxA antiterminator sequence of the ribosomal RNA (rrn) operons. This is Transcription antitermination protein NusB from Campylobacter fetus subsp. fetus (strain 82-40).